The following is a 307-amino-acid chain: uncharacterized protein (307 aa).

One can recognise an ABC transporter domain in the interval 5 to 233; sequence VQTNGLTKTY…NTEYIELVTP (229 aa). 37–44 is a binding site for ATP; sequence GPNGAGKT.

Belongs to the ABC transporter superfamily.

This is an uncharacterized protein from Bacillus subtilis (strain 168).